A 503-amino-acid polypeptide reads, in one-letter code: Aminoaldehyde dehydrogenase 1, peroxisomal (503 aa).

Na(+) is bound by residues Ile28, Asp99, and Leu189. 238–245 provides a ligand contact to NAD(+); it reads GSTMTGSK. The active-site Proton acceptor is the Glu260. 2 residues coordinate NAD(+): Cys294 and Glu393. Cys294 acts as the Nucleophile in catalysis.

The protein belongs to the aldehyde dehydrogenase family. Expressed in leaves, flowers and fruits.

The protein localises to the cytoplasm. It is found in the cytosol. It carries out the reaction 4-aminobutanal + NAD(+) + H2O = 4-aminobutanoate + NADH + 2 H(+). The enzyme catalyses 3-aminopropanal + NAD(+) + H2O = beta-alanine + NADH + 2 H(+). Its pathway is amine and polyamine biosynthesis; betaine biosynthesis via choline pathway; betaine from betaine aldehyde: step 1/1. Its function is as follows. Dehydrogenase that catalyzes the oxidation of several aminoaldehydes. Metabolizes and detoxifies aldehyde products of polyamine degradation to non-toxic amino acids. Catalyzes the oxidation of 4-aminobutanal and 3-aminopropanal to 4-aminobutanoate and beta-alanine, respectively. The chain is Aminoaldehyde dehydrogenase 1, peroxisomal from Malus domestica (Apple).